The sequence spans 103 residues: Large ribosomal subunit protein uL24 (103 aa).

This sequence belongs to the universal ribosomal protein uL24 family. Part of the 50S ribosomal subunit.

Functionally, one of two assembly initiator proteins, it binds directly to the 5'-end of the 23S rRNA, where it nucleates assembly of the 50S subunit. Its function is as follows. One of the proteins that surrounds the polypeptide exit tunnel on the outside of the subunit. The protein is Large ribosomal subunit protein uL24 of Anoxybacillus flavithermus (strain DSM 21510 / WK1).